Consider the following 496-residue polypeptide: 3-octaprenyl-4-hydroxybenzoate carboxy-lyase (496 aa).

Asparagine 181 contacts Mn(2+). Prenylated FMN is bound by residues 184–186 (IYR), 198–200 (RWL), and 203–204 (RG). Glutamate 247 contacts Mn(2+). Aspartate 296 serves as the catalytic Proton donor.

This sequence belongs to the UbiD family. In terms of assembly, homohexamer. The cofactor is prenylated FMN. Mn(2+) is required as a cofactor.

It localises to the cell membrane. The catalysed reaction is a 4-hydroxy-3-(all-trans-polyprenyl)benzoate + H(+) = a 2-(all-trans-polyprenyl)phenol + CO2. Its pathway is cofactor biosynthesis; ubiquinone biosynthesis. In terms of biological role, catalyzes the decarboxylation of 3-octaprenyl-4-hydroxy benzoate to 2-octaprenylphenol, an intermediate step in ubiquinone biosynthesis. This chain is 3-octaprenyl-4-hydroxybenzoate carboxy-lyase, found in Aromatoleum aromaticum (strain DSM 19018 / LMG 30748 / EbN1) (Azoarcus sp. (strain EbN1)).